Reading from the N-terminus, the 178-residue chain is Large ribosomal subunit protein uL6 (178 aa).

Belongs to the universal ribosomal protein uL6 family. In terms of assembly, part of the 50S ribosomal subunit.

This protein binds to the 23S rRNA, and is important in its secondary structure. It is located near the subunit interface in the base of the L7/L12 stalk, and near the tRNA binding site of the peptidyltransferase center. The sequence is that of Large ribosomal subunit protein uL6 from Campylobacter hominis (strain ATCC BAA-381 / DSM 21671 / CCUG 45161 / LMG 19568 / NCTC 13146 / CH001A).